The primary structure comprises 403 residues: Solanesyl-diphosphate synthase 2, chloroplastic (403 aa).

A chloroplast-targeting transit peptide spans 1 to 62; it reads MLSVSCPRVY…QPGLAAVDVP (62 aa). Positions 123, 126, and 161 each coordinate isopentenyl diphosphate. Asp-168 and Asp-172 together coordinate Mg(2+). Arg-177 contacts an all-trans-polyprenyl diphosphate. Arg-178 lines the isopentenyl diphosphate pocket. 4 residues coordinate an all-trans-polyprenyl diphosphate: Lys-254, Thr-255, Gln-292, and Lys-309.

It belongs to the FPP/GGPP synthase family. As to quaternary structure, homodimer. Interacts with FBN5. The cofactor is Mg(2+). In terms of tissue distribution, expressed in leaves, stems and roots. Highest expression in leaves and roots.

The protein resides in the plastid. The protein localises to the chloroplast. It carries out the reaction 7 isopentenyl diphosphate + (2E)-geranyl diphosphate = all-trans-nonaprenyl diphosphate + 7 diphosphate. Functionally, involved in providing solanesyl diphosphate for plastoquinone-9 (PQ-9) formation. Geranyl diphosphate is the preferred substrate. This is Solanesyl-diphosphate synthase 2, chloroplastic from Oryza sativa subsp. japonica (Rice).